Consider the following 70-residue polypeptide: U2-agatoxin-Ao1j (70 aa).

Positions 1–20 are cleaved as a signal peptide; it reads MRAIISLLLISAMVFSMIAA. Residues 21 to 34 constitute a propeptide that is removed on maturation; it reads VPEEEGLQLSEDER. Cystine bridges form between Cys-37–Cys-53, Cys-44–Cys-58, and Cys-52–Cys-68. Leu-69 is modified (leucine amide).

Belongs to the neurotoxin 01 (U2-agtx) family. In terms of tissue distribution, expressed by the venom gland.

Its subcellular location is the secreted. Functionally, insect active toxin causing rapid but reversible paralysis in crickets. No activity shown in mammals. Does not show effect on mammalian voltage-gated calcium channels. This is U2-agatoxin-Ao1j from Agelena orientalis (Funnel-web spider).